The primary structure comprises 142 residues: Hemoglobin subunit beta (142 aa).

A Globin domain is found at 3 to 142 (KLSEDQEHYI…VAEALSSNYH (140 aa)). Heme b is bound by residues His60 and His89.

This sequence belongs to the globin family. In terms of assembly, heterotetramer of two alpha chains and two beta chains. In terms of tissue distribution, red blood cells.

In terms of biological role, involved in oxygen transport from gills to the various peripheral tissues. This Hemitrygon akajei (Red stingray) protein is Hemoglobin subunit beta (HBB).